The following is a 665-amino-acid chain: Putative phospholipid:diacylglycerol acyltransferase 2 (665 aa).

A helical transmembrane segment spans residues 48-68; that stretch reads LIGYLCTAWWLLLFLYHSVPV. S237 (acyl-ester intermediate) is an active-site residue. Residues D567 and H620 each act as charge relay system in the active site.

This sequence belongs to the AB hydrolase superfamily. Lipase family.

The protein resides in the membrane. The catalysed reaction is a glycerophospholipid + a 1,2-diacyl-sn-glycerol = a monoacylglycerophospholipid + a triacyl-sn-glycerol. This is Putative phospholipid:diacylglycerol acyltransferase 2 (PDAT2) from Arabidopsis thaliana (Mouse-ear cress).